The sequence spans 382 residues: Succinyl-diaminopimelate desuccinylase (382 aa).

H71 contributes to the Zn(2+) binding site. D73 is an active-site residue. D105 serves as a coordination point for Zn(2+). The active-site Proton acceptor is E139. Zn(2+)-binding residues include E140, E168, and H354.

It belongs to the peptidase M20A family. DapE subfamily. Homodimer. It depends on Zn(2+) as a cofactor. Co(2+) is required as a cofactor.

It carries out the reaction N-succinyl-(2S,6S)-2,6-diaminopimelate + H2O = (2S,6S)-2,6-diaminopimelate + succinate. It functions in the pathway amino-acid biosynthesis; L-lysine biosynthesis via DAP pathway; LL-2,6-diaminopimelate from (S)-tetrahydrodipicolinate (succinylase route): step 3/3. In terms of biological role, catalyzes the hydrolysis of N-succinyl-L,L-diaminopimelic acid (SDAP), forming succinate and LL-2,6-diaminopimelate (DAP), an intermediate involved in the bacterial biosynthesis of lysine and meso-diaminopimelic acid, an essential component of bacterial cell walls. This chain is Succinyl-diaminopimelate desuccinylase, found in Stutzerimonas stutzeri (strain A1501) (Pseudomonas stutzeri).